Reading from the N-terminus, the 1350-residue chain is ABC-type transporter MDR1 (1350 aa).

Residues 1–11 (MDTVHEGHHGS) show a composition bias toward basic and acidic residues. Residues 1–84 (MDTVHEGHHG…DEGEDPFAHL (84 aa)) are disordered. Residues 22-33 (VEVTNYEKTQLG) are compositionally biased toward polar residues. Over residues 52–63 (KKHKSQKEKKHK) the composition is skewed to basic residues. Positions 121 to 411 (VLSALSSIIG…VAPNIQAFTT (291 aa)) constitute an ABC transmembrane type-1 1 domain. Transmembrane regions (helical) follow at residues 124–144 (ALSSIIGGALLPLMTIVFGGL), 170–190 (LYFLYLAIGEFVFVYIATAGF), 243–263 (KVGLTLTALATFITAFVVSFI), 271–291 (ILMSTVFAIVFTMGGMSGFIV), 350–370 (GSMIGFLMCYVYLNYSLAFWM), and 380–400 (IEVGDVLTIILSIMIGAFALG). The ABC transporter 1 domain occupies 446–691 (IELRNIRHIY…QGAYYNLVEA (246 aa)). 481–488 (GESGSGKS) provides a ligand contact to ATP. A compositionally biased stretch (basic and acidic residues) spans 712–731 (KDQNLKHETTKGEQPEDGLK). Residues 712–734 (KDQNLKHETTKGEQPEDGLKLAR) form a disordered region. 6 helical membrane-spanning segments follow: residues 779–799 (IGIICSVITGGGNPTQAVFFA), 830–850 (FMLALVQFSAFLIQGYVFAVC), 903–923 (LGTILSVIVTLVAAFSVSLAI), 929–949 (LVCISTVPILLACGFLRFWML), 1014–1034 (ASQSLIFCCTALGFWYGGTLI), and 1044–1064 (FFLCFSAVIFGAQSAGTIFSF). Residues 779–1070 (IGIICSVITG…IFSFAPDMGK (292 aa)) form the ABC transmembrane type-1 2 domain. The 239-residue stretch at 1105–1343 (IEFRDVHFRY…RGRYWELVNL (239 aa)) folds into the ABC transporter 2 domain. Asparagine 1127 is a glycosylation site (N-linked (GlcNAc...) asparagine). Position 1140–1147 (1140–1147 (GASGCGKS)) interacts with ATP.

The protein belongs to the ABC transporter superfamily. ABCB family. Multidrug resistance exporter (TC 3.A.1.201) subfamily.

It localises to the cell membrane. Its function is as follows. ABC-type transporter that is involved in the secretion of liamocins, glycolipids (also called heavy oils) composed of a single mannitol or arabitol headgroup linked to either three, four or even six 3,5-dihydroxydecanoic ester tail-groups. This chain is ABC-type transporter MDR1, found in Aureobasidium melanogenum (Aureobasidium pullulans var. melanogenum).